The following is a 1425-amino-acid chain: Protein NAP1 (1425 aa).

Polar residues-rich tracts occupy residues 1 to 20 (MANSRQYYPSQDESMSPTSV), 1299 to 1312 (TPLSTASPYHSPSV), and 1320 to 1329 (SMKNSTTPQR). Disordered regions lie at residues 1-24 (MANSRQYYPSQDESMSPTSVRSRE) and 1299-1425 (TPLS…KQHN). Residues 1362–1405 (SETGNSRNNENNNNNKQRGSSRRSGPLDYSSSHKGGSGSNSTGP) show a composition bias toward low complexity.

The protein belongs to the HEM-1/HEM-2 family. Binds PIR. Expressed in roots, root hairs, hypocotyls, cotyledons, stems, leaves, trichomes, and flowers.

Its function is as follows. Involved in regulation of actin and microtubule organization. Part of a WAVE complex that activates the Arp2/3 complex. This Arabidopsis thaliana (Mouse-ear cress) protein is Protein NAP1 (NAP1).